The following is a 440-amino-acid chain: Methylthioribose-1-phosphate isomerase (440 aa).

Residue D285 is the Proton donor of the active site.

It belongs to the eIF-2B alpha/beta/delta subunits family. MtnA subfamily.

The protein localises to the cytoplasm. It is found in the nucleus. The catalysed reaction is 5-(methylsulfanyl)-alpha-D-ribose 1-phosphate = 5-(methylsulfanyl)-D-ribulose 1-phosphate. It functions in the pathway amino-acid biosynthesis; L-methionine biosynthesis via salvage pathway; L-methionine from S-methyl-5-thio-alpha-D-ribose 1-phosphate: step 1/6. Functionally, catalyzes the interconversion of methylthioribose-1-phosphate (MTR-1-P) into methylthioribulose-1-phosphate (MTRu-1-P). The protein is Methylthioribose-1-phosphate isomerase (mri1) of Botryotinia fuckeliana (strain B05.10) (Noble rot fungus).